A 437-amino-acid chain; its full sequence is MGSTLKHLLLLLLVLIRHVDSAAIVKSLPGLEGRLPFELETGYIGIGEEEDIQLFYYFIKSENNPKEDPLLLWLDGGPGCSSLGGLLFENGPVALKSAVYNGSNPSLFSTTYSWTKMANIIYLDQPVGSGFSYSRTPIGKSSDTSEVKRIHEFLQKWLSKHPQFFSNPFYVTGDSYSGMIVPALVQEISKGNYICCKHLINLQGYVLGNPITYAEHEKNYRIPFSHGMSLISDELYESLKRNCKGNYENVDPRNTKCVRLVEEYHKCTDKINTQHILIPDCDKKGHGITSPDCYYYLYFLIECWANNERVREALHVTKGTKGQWQRCNWTIPYDNNIISSVPYHMDNSINGYRSLIYSGDHDITMPFQATQAWIKSLNYSIVDDWRPWMINDQIAGYTRTYSNKMTFATVKGGGHTAEYLPNESSIMFQRWISGQPL.

The N-terminal stretch at 1–21 is a signal peptide; the sequence is MGSTLKHLLLLLLVLIRHVDS. 3 cysteine pairs are disulfide-bonded: Cys80–Cys327, Cys243–Cys257, and Cys281–Cys293. N-linked (GlcNAc...) asparagine glycosylation is present at Asn101. The active site involves Ser175. The N-linked (GlcNAc...) asparagine glycan is linked to Asn328. Asp362 is a catalytic residue. N-linked (GlcNAc...) asparagine glycosylation occurs at Asn378. His415 is a catalytic residue. N-linked (GlcNAc...) asparagine glycosylation is present at Asn422.

This sequence belongs to the peptidase S10 family. As to expression, expressed in senescent leaves.

The protein localises to the secreted. Involved in the biosynthesis of sinapoylated anthocyanins. The chain is Serine carboxypeptidase-like 10 (SCPL10) from Arabidopsis thaliana (Mouse-ear cress).